The primary structure comprises 374 residues: Putative zinc metalloprotease R01501 (374 aa).

Residue H26 participates in Zn(2+) binding. E27 is a catalytic residue. H30 is a binding site for Zn(2+). A run of 4 helical transmembrane segments spans residues 36-55, 112-134, 301-323, and 348-367; these read WSGIRILAFSVGFGPELFGW, AATVAAGPIANFLLAIAIFAVLF, VLNFAAVLSVSIGLLNLMPVPVL, and LAFRIGFAMVLMLTVFAAWN. The region spanning 126–199 is the PDZ domain; the sequence is AIAIFAVLFS…LPITVRIERE (74 aa).

Belongs to the peptidase M50B family. It depends on Zn(2+) as a cofactor.

It localises to the cell inner membrane. The chain is Putative zinc metalloprotease R01501 from Rhizobium meliloti (strain 1021) (Ensifer meliloti).